Reading from the N-terminus, the 260-residue chain is MHDWNPALYRRFEDERTRPAHELLARVPLSAASHVVDLGCGPGNSTELLAVRFPGARVTGIDTSAAMLQSARERLPAAEFVQADIAAWAPQPGEAPDLLYANASLQWVGGHESLIPRLFAALAPGGVLAIQMPDNRQEPSHRTMREVAAQAPWRDAIGDAAAVRTRILGIADYYDLLAPIARSVDVWHTVYQHPMASAAAIVEWVSGTGLKPFVDPLPEAQRAGFLAAYERGIDAAYPVRADGQRLLAFPRMFIVARRSA.

It belongs to the methyltransferase superfamily. Tam family.

It is found in the cytoplasm. It carries out the reaction trans-aconitate + S-adenosyl-L-methionine = (E)-3-(methoxycarbonyl)pent-2-enedioate + S-adenosyl-L-homocysteine. In terms of biological role, catalyzes the S-adenosylmethionine monomethyl esterification of trans-aconitate. The protein is Trans-aconitate 2-methyltransferase of Paracidovorax citrulli (strain AAC00-1) (Acidovorax citrulli).